Consider the following 398-residue polypeptide: cAMP-dependent protein kinase, catalytic subunit-like (398 aa).

In terms of domain architecture, Protein kinase spans 90–344 (LERIITIGKG…TQDVKDHKWF (255 aa)). Residues 96 to 104 (IGKGTFGRV) and lysine 119 contribute to the ATP site. Residue aspartate 213 is the Proton acceptor of the active site. The AGC-kinase C-terminal domain occupies 345–398 (EKVNWDDTLHLRVEPPIVPTLYHPGDTGNFDDYEEDTTGGPLCSQRDRDLFAEW).

It belongs to the protein kinase superfamily. Ser/Thr protein kinase family. cAMP subfamily.

It carries out the reaction L-seryl-[protein] + ATP = O-phospho-L-seryl-[protein] + ADP + H(+). The enzyme catalyses L-threonyl-[protein] + ATP = O-phospho-L-threonyl-[protein] + ADP + H(+). The polypeptide is cAMP-dependent protein kinase, catalytic subunit-like (Caenorhabditis elegans).